Consider the following 556-residue polypeptide: MKPEDLSALLSAVLTDAVDAGDLPAALREGITPARVKVERPRSREHGDWATNVALQLGKKAGMAPRDLAGLVAERLTGKPGIAAVDVAGPGFLNVTLDAASAGALAREIVEAGPEYGRNDTLAGHTVNMEFVSANPTGPLHIGHTRWAALGDAIARLLRASGADVTAEYYVNDAGNQMNVFADSVLARLHGRDVPAGGYPGAYVQELADAVALEHPDVRELTDEAARPVVREAAYRLQMQDIKDTLAAFDVHFDVFTSEQTLHDSGAIDQAVQRLREQGHIEDREGAVWLKTTDFGDDKDRVLIRANGEPTYFAADAAYYLHKRDRGFEEKVYLLGADHHGYVNRLKAIAAAAGDDPATNIEILIGQLISVNGAKLSKRAGNIIELKDLVEWLGRDALRYDLARYPADSPLTIDPELLRSATNDNPVYYVQYAHARASGAARTAQAHGVDRSEFDAALLTHATESELLAQLAEFPAVVAAAARLREPHRVTRHLEVIAGAYHSWYAACRIVPMPTDDGTPRPVETLNRTRLWLNDATAQVLANGLGLLGVSAPEKM.

Residues 134 to 144 (ANPTGPLHIGH) carry the 'HIGH' region motif.

It belongs to the class-I aminoacyl-tRNA synthetase family. Monomer.

It localises to the cytoplasm. It carries out the reaction tRNA(Arg) + L-arginine + ATP = L-arginyl-tRNA(Arg) + AMP + diphosphate. This is Arginine--tRNA ligase from Micrococcus luteus (strain ATCC 4698 / DSM 20030 / JCM 1464 / CCM 169 / CCUG 5858 / IAM 1056 / NBRC 3333 / NCIMB 9278 / NCTC 2665 / VKM Ac-2230) (Micrococcus lysodeikticus).